Reading from the N-terminus, the 243-residue chain is Small ribosomal subunit protein uS2 (243 aa).

It belongs to the universal ribosomal protein uS2 family.

This chain is Small ribosomal subunit protein uS2, found in Chromobacterium violaceum (strain ATCC 12472 / DSM 30191 / JCM 1249 / CCUG 213 / NBRC 12614 / NCIMB 9131 / NCTC 9757 / MK).